We begin with the raw amino-acid sequence, 186 residues long: ADP-ribosylation factor-like protein 8A (186 aa).

Positions 1-19 form an intramembrane region, note=Mediates targeting to membranes; it reads MIALFNKLLDWFKALFWKE. GTP contacts are provided by residues 29-35, 71-75, and 130-133; these read QYSGKTT, DIGGQ, and NKRD.

The protein belongs to the small GTPase superfamily. Arf family. In terms of assembly, interacts with PLEKHM1. When GTP-bound, interacts with RUFY3 and RUFY4, but not with RUFY1, nor RUFY2.

It localises to the late endosome membrane. The protein localises to the lysosome membrane. Its subcellular location is the cytoplasm. The protein resides in the cytoskeleton. It is found in the spindle. It localises to the cell projection. The protein localises to the axon. Its subcellular location is the synapse. Functionally, plays a role in lysosomes motility. In neurons, mediates the anterograde axonal long-range transport of presynaptic lysosome-related vesicles required for presynaptic biogenesis and synaptic function. May play a role in chromosome segregation. This is ADP-ribosylation factor-like protein 8A (Arl8a) from Mus musculus (Mouse).